An 830-amino-acid polypeptide reads, in one-letter code: DNA gyrase subunit A (830 aa).

In terms of domain architecture, Topo IIA-type catalytic spans 34-514; that stretch reads LPDVRDGLKP…NHSDINMEDL (481 aa). Tyrosine 122 (O-(5'-phospho-DNA)-tyrosine intermediate) is an active-site residue. Positions 541–547 match the GyrA-box motif; that stretch reads QRRGGKG.

This sequence belongs to the type II topoisomerase GyrA/ParC subunit family. In terms of assembly, heterotetramer, composed of two GyrA and two GyrB chains. In the heterotetramer, GyrA contains the active site tyrosine that forms a transient covalent intermediate with DNA, while GyrB binds cofactors and catalyzes ATP hydrolysis.

It localises to the cytoplasm. The enzyme catalyses ATP-dependent breakage, passage and rejoining of double-stranded DNA.. Functionally, a type II topoisomerase that negatively supercoils closed circular double-stranded (ds) DNA in an ATP-dependent manner to modulate DNA topology and maintain chromosomes in an underwound state. Negative supercoiling favors strand separation, and DNA replication, transcription, recombination and repair, all of which involve strand separation. Also able to catalyze the interconversion of other topological isomers of dsDNA rings, including catenanes and knotted rings. Type II topoisomerases break and join 2 DNA strands simultaneously in an ATP-dependent manner. The sequence is that of DNA gyrase subunit A from Buchnera aphidicola subsp. Acyrthosiphon pisum (strain APS) (Acyrthosiphon pisum symbiotic bacterium).